Consider the following 325-residue polypeptide: Transaldolase (325 aa).

Lys-125 (schiff-base intermediate with substrate) is an active-site residue.

The protein belongs to the transaldolase family. Type 2 subfamily.

Its subcellular location is the cytoplasm. It catalyses the reaction D-sedoheptulose 7-phosphate + D-glyceraldehyde 3-phosphate = D-erythrose 4-phosphate + beta-D-fructose 6-phosphate. It participates in carbohydrate degradation; pentose phosphate pathway; D-glyceraldehyde 3-phosphate and beta-D-fructose 6-phosphate from D-ribose 5-phosphate and D-xylulose 5-phosphate (non-oxidative stage): step 2/3. Functionally, transaldolase is important for the balance of metabolites in the pentose-phosphate pathway. The polypeptide is Transaldolase (Campylobacter jejuni subsp. doylei (strain ATCC BAA-1458 / RM4099 / 269.97)).